The chain runs to 342 residues: Trans-enoyl reductase himH (342 aa).

46-49 is a binding site for NADP(+); it reads TDWK. 133-140 contributes to the substrate binding site; the sequence is LSVSTAAS. NADP(+)-binding positions include 168 to 171, 191 to 194, 255 to 256, and 329 to 330; these read SSSV, SQAN, VM, and VS.

It belongs to the zinc-containing alcohol dehydrogenase family. As to quaternary structure, monomer.

It participates in secondary metabolite biosynthesis. Its function is as follows. Trans-enoyl reductase; part of the him gene cluster that mediates the biosynthesis of himeic acid A, a ubiquitin-activating enzyme (E1) inhibitor. First, himA, together with the trans-enoyl reductase himH, catalyzes the formation of apolyketide chain, which is then condensed with leucine by the NRPS activity of himA. Dieckmann cyclization and release from himA gives a tetramic acid intermediate as the product of himA PKS-NRPS. HimG then catalyzes alpha-oxidation of the tetramic acid ring, with a subsequent rearrangement to yield apyrone intermediate. Two terminal methyl groups of polyketide and amide side chains are oxidized to carboxylic acids by himC cytochrome P450 monooxygenase to form himeic acid A. Himeic acid A is further converted to himeic acid B and C during culture growth. No gene responsible for pyrone to pyridone conversion was found in the him gene cluster and himeic acid A is non-enzymatically converted to himeic acid C by the incorporation of an ammonium nitrogen atom in a pH5 buffer, and to himeic acid B at a conversion ratio of 50% during incubation in MeOH for 5 days. This Aspergillus japonicus protein is Trans-enoyl reductase himH.